Here is a 316-residue protein sequence, read N- to C-terminus: MDFVRPHLLAIEGLHPPEIHALLDLAESYALLNRSGKTQRDLLRGRTLINLFFEDSTRTRTSFELAGKRLGADVINMSVSTSSVNKGETLLDTASTLNAMHCDLLVVRHSQSGAPNLLAQKVDAAVINAGDGTHEHPTQALLDALTIRRHKGRLEGLTVAICGDVLHSRVARSNIYLLASLGSQVRLIGPPTLIPGAADRLGVEVFHDMDRGLDGADVVMMLRLQRERMKSGLVPSEREYFRFFGLNEARLAKAKPDAIIMHPGPMNRGVEIESRVADDPVRSVIKEQVEMGVAVRMAVLDALARQRSRLPSSRPV.

Carbamoyl phosphate-binding residues include arginine 58 and threonine 59. Lysine 86 is an L-aspartate binding site. Residues arginine 108, histidine 136, and glutamine 139 each contribute to the carbamoyl phosphate site. Positions 169 and 223 each coordinate L-aspartate. Positions 264 and 265 each coordinate carbamoyl phosphate.

It belongs to the aspartate/ornithine carbamoyltransferase superfamily. ATCase family. In terms of assembly, heterododecamer (2C3:3R2) of six catalytic PyrB chains organized as two trimers (C3), and six regulatory PyrI chains organized as three dimers (R2).

It catalyses the reaction carbamoyl phosphate + L-aspartate = N-carbamoyl-L-aspartate + phosphate + H(+). It participates in pyrimidine metabolism; UMP biosynthesis via de novo pathway; (S)-dihydroorotate from bicarbonate: step 2/3. Its function is as follows. Catalyzes the condensation of carbamoyl phosphate and aspartate to form carbamoyl aspartate and inorganic phosphate, the committed step in the de novo pyrimidine nucleotide biosynthesis pathway. This Granulibacter bethesdensis (strain ATCC BAA-1260 / CGDNIH1) protein is Aspartate carbamoyltransferase catalytic subunit.